A 231-amino-acid polypeptide reads, in one-letter code: Phosphoglycolate phosphatase (231 aa).

Catalysis depends on Asp-9, which acts as the Nucleophile. The Mg(2+) site is built by Asp-9 and Asp-11. Lys-154 contacts substrate. Mg(2+) contacts are provided by Asp-177 and Asp-181.

It belongs to the archaeal SPP-like hydrolase family. It depends on Mg(2+) as a cofactor.

The enzyme catalyses 2-phosphoglycolate + H2O = glycolate + phosphate. Catalyzes the dephosphorylation of 2-phosphoglycolate. In Pyrococcus furiosus (strain ATCC 43587 / DSM 3638 / JCM 8422 / Vc1), this protein is Phosphoglycolate phosphatase.